The chain runs to 266 residues: MLLLTRSPTAWHRLSQLKPRVLPGTLGGQALHLRSWLLSRQGPAETGGQGQPQGPGLRTRLLITGLFGAGLGGAWLALRAEKERLQQQKRTEALRQAAVGQGDFHLLDHRGRARCKADFRGQWVLMYFGFTHCPDICPDELEKLVQVVRQLEAEPGLPPVQPVFITVDPERDDVEAMARYVQDFHPRLLGLTGSTKQVAQASHSYRVYYNAGPKDEDQDYIVDHSIAIYLLNPDGLFTDYYGRSRSAEQISDSVRRHMAAFRSVLS.

The transit peptide at 1–41 (MLLLTRSPTAWHRLSQLKPRVLPGTLGGQALHLRSWLLSRQ) directs the protein to the mitochondrion. Topologically, residues 42 to 60 (GPAETGGQGQPQGPGLRTR) are mitochondrial matrix. A helical transmembrane segment spans residues 61-78 (LLITGLFGAGLGGAWLAL). Over 79 to 266 (RAEKERLQQQ…HMAAFRSVLS (188 aa)) the chain is Mitochondrial intermembrane. Residues 85–259 (LQQQKRTEAL…ISDSVRRHMA (175 aa)) enclose the Thioredoxin domain. Residues C133, C137, and H224 each coordinate Cu cation. An intrachain disulfide couples C133 to C137.

It belongs to the SCO1/2 family. In terms of assembly, homodimer. Interacts with COA6. Found in a complex with TMEM177, COX20, COA6, MT-CO2/COX2, COX18 and SCO1. Interacts with TMEM177 in a COX20-dependent manner. Interacts with COX20 in a MT-CO2/COX2- and COX18-dependent manner. Interacts with COX16. Ubiquitous.

Its subcellular location is the mitochondrion inner membrane. In terms of biological role, copper metallochaperone essential for the synthesis and maturation of cytochrome c oxidase subunit II (MT-CO2/COX2) by facilitating the incorporation of copper into the Cu(A) site of MT-CO2/COX2. Could also act as a thiol-disulfide oxidoreductase to regulate the redox state of the cysteines in SCO1 during maturation of MT-CO2/COX2. The protein is Protein SCO2 homolog, mitochondrial (SCO2) of Homo sapiens (Human).